A 332-amino-acid polypeptide reads, in one-letter code: Beta-1,3-N-acetylglucosaminyltransferase radical fringe (332 aa).

The Cytoplasmic segment spans residues 1–6 (MSRARR). The helical; Signal-anchor for type II membrane protein transmembrane segment at 7–29 (VLCRACLALAAVLAVLLLLPLPL) threads the bilayer. Topologically, residues 30–332 (PLPLPRAPAP…MKNRVEGAFQ (303 aa)) are lumenal. Position 75 (Arg75) interacts with substrate. Asn114 is a glycosylation site (N-linked (GlcNAc...) asparagine). Cystine bridges form between Cys115/Cys126 and Cys144/Cys208. Asp148 lines the substrate pocket. Asp149 is a binding site for Mn(2+). Asp238 is a catalytic residue. His262 provides a ligand contact to Mn(2+). Cys312 and Cys321 form a disulfide bridge.

The protein belongs to the glycosyltransferase 31 family. Mn(2+) is required as a cofactor. As to expression, detected in all the examined tissues (12.5 dpc). High expression found in adult brain.

Its subcellular location is the golgi apparatus membrane. It carries out the reaction 3-O-(alpha-L-fucosyl)-L-threonyl-[EGF-like domain protein] + UDP-N-acetyl-alpha-D-glucosamine = 3-O-(N-acetyl-beta-D-glucosaminyl-(1-&gt;3)-alpha-L-fucosyl)-L-threonyl-[EGF-like domain protein] + UDP + H(+). The catalysed reaction is 3-O-(alpha-L-fucosyl)-L-seryl-[EGF-like domain protein] + UDP-N-acetyl-alpha-D-glucosamine = 3-O-(N-acetyl-beta-D-glucosaminyl-(1-&gt;3)-alpha-L-fucosyl)-L-seryl-[EGF-like domain protein] + UDP + H(+). In terms of biological role, glycosyltransferase that initiates the elongation of O-linked fucose residues attached to EGF-like repeats in the extracellular domain of Notch molecules. Modulates NOTCH1 activity by modifying O-fucose residues at specific EGF-like domains resulting in enhancement of NOTCH1 activation by DLL1 and JAG1. May be involved in limb formation and in neurogenesis. This is Beta-1,3-N-acetylglucosaminyltransferase radical fringe from Mus musculus (Mouse).